The sequence spans 546 residues: 2-isopropylmalate synthase (546 aa).

The Pyruvate carboxyltransferase domain occupies 5 to 274 (ITIFDTTLRD…TADVHTEHLT (270 aa)). Mn(2+) contacts are provided by aspartate 14, histidine 209, histidine 211, and asparagine 245. The regulatory domain stretch occupies residues 415-546 (RLDQFSVHLS…QNGIMHTYGE (132 aa)).

This sequence belongs to the alpha-IPM synthase/homocitrate synthase family. LeuA type 1 subfamily. In terms of assembly, homodimer. Mn(2+) serves as cofactor.

It is found in the cytoplasm. It catalyses the reaction 3-methyl-2-oxobutanoate + acetyl-CoA + H2O = (2S)-2-isopropylmalate + CoA + H(+). Its pathway is amino-acid biosynthesis; L-leucine biosynthesis; L-leucine from 3-methyl-2-oxobutanoate: step 1/4. Catalyzes the condensation of the acetyl group of acetyl-CoA with 3-methyl-2-oxobutanoate (2-ketoisovalerate) to form 3-carboxy-3-hydroxy-4-methylpentanoate (2-isopropylmalate). The sequence is that of 2-isopropylmalate synthase from Salinibacter ruber (strain M8).